The primary structure comprises 373 residues: Centrosomal protein of 41 kDa (373 aa).

The tract at residues glutamine 89–asparagine 127 is disordered. A phosphoserine mark is found at serine 96 and serine 99. Over residues alanine 107 to asparagine 127 the composition is skewed to polar residues. At threonine 109 the chain carries Phosphothreonine. Serine 114 and serine 121 each carry phosphoserine. The Rhodanese domain maps to proline 169–isoleucine 266. Disordered stretches follow at residues glutamine 275 to tryptophan 300 and glutamate 315 to lysine 373. Arginine 343 is subject to Omega-N-methylarginine.

The protein belongs to the CEP41 family. In terms of assembly, found in a complex with TTLL6.

Its subcellular location is the cytoplasm. The protein localises to the cytoskeleton. The protein resides in the microtubule organizing center. It localises to the centrosome. It is found in the cell projection. Its subcellular location is the cilium. The protein localises to the cilium basal body. In terms of biological role, required during ciliogenesis for tubulin glutamylation in cilium. Probably acts by participating in the transport of TTLL6, a tubulin polyglutamylase, between the basal body and the cilium. This chain is Centrosomal protein of 41 kDa (CEP41), found in Bos taurus (Bovine).